Here is a 404-residue protein sequence, read N- to C-terminus: Methionine aminopeptidase 1D, mitochondrial (404 aa).

Residues 1–58 constitute a mitochondrion transit peptide; the sequence is MNKILKNIINKSSINNVFKTSFNGGISSSSSSSSSYLNNNNNIIKSYNVQQKQQQRYY. A disordered region spans residues 86–109; that stretch reads VRSQRLTKKTASPLEGMNRKERRK. His232 is a binding site for substrate. A divalent metal cation contacts are provided by Asp249, Asp260, and His323. His330 contacts substrate. A divalent metal cation contacts are provided by Glu355 and Glu389.

This sequence belongs to the peptidase M24A family. Methionine aminopeptidase type 1 subfamily. It depends on Co(2+) as a cofactor. Zn(2+) is required as a cofactor. The cofactor is Mn(2+). Requires Fe(2+) as cofactor.

It localises to the mitochondrion. It carries out the reaction Release of N-terminal amino acids, preferentially methionine, from peptides and arylamides.. Its function is as follows. Removes the N-terminal methionine from nascent proteins. The N-terminal methionine is often cleaved when the second residue in the primary sequence is small and uncharged (Met-Ala-, Cys, Gly, Pro, Ser, Thr, or Val). This is Methionine aminopeptidase 1D, mitochondrial (metap1d) from Dictyostelium discoideum (Social amoeba).